Reading from the N-terminus, the 142-residue chain is Large ribosomal subunit protein uL13 (142 aa).

The protein belongs to the universal ribosomal protein uL13 family. In terms of assembly, part of the 50S ribosomal subunit.

In terms of biological role, this protein is one of the early assembly proteins of the 50S ribosomal subunit, although it is not seen to bind rRNA by itself. It is important during the early stages of 50S assembly. The protein is Large ribosomal subunit protein uL13 of Acholeplasma laidlawii (strain PG-8A).